Here is a 282-residue protein sequence, read N- to C-terminus: MTTTSAPARNGTRRPSRPIVLLIPVPGSSVIHDLWAGTKLLVVFGISVLLTFYPGWVTIGMMAALVLAAARIAHIPRGALPSVPRWLWIVLAIGFLTAALAGGTPVVAVGGVQLGLGGALHFLRITALSVVLLALGAMVSWTTNVAEISPAVATLGRPFRVLRIPVDEWAVALALALRAFPMLIDEFQVLYAARRLRPKRMPPSRKARRQRHARELIDLLAAAITVTLRRADEMGDAITARGGTGQLSAHPGRPKLADWVTLAITAMASGTAVAIESLILHS.

The next 6 helical transmembrane spans lie at 18-38 (PIVL…WAGT), 40-60 (LLVV…VTIG), 87-107 (LWIV…TPVV), 119-139 (ALHF…GAMV), 164-184 (IPVD…PMLI), and 260-280 (VTLA…SLIL).

Belongs to the CbiQ family.

It localises to the cell membrane. This is an uncharacterized protein from Mycobacterium tuberculosis (strain CDC 1551 / Oshkosh).